Consider the following 203-residue polypeptide: Putative zinc finger protein 876 (203 aa).

4 C2H2-type zinc fingers span residues 63 to 85 (YTCEECGKAFYRSSHLTEHKNIH), 91 to 113 (YKCEECGNAFYRSSHLTKHKRIH), 119 to 141 (YKCEECGKAFRQSSALNEHKKIH), and 147 to 169 (YKCKECGKAFRWSRSLNEHTNIH). Residues 175–197 (YTCEECGKDFTWSSTLTVHQRIQ) form a C2H2-type 5; degenerate zinc finger.

It belongs to the krueppel C2H2-type zinc-finger protein family.

The protein localises to the nucleus. Its function is as follows. May be involved in transcriptional regulation. The chain is Putative zinc finger protein 876 (ZNF876P) from Homo sapiens (Human).